We begin with the raw amino-acid sequence, 568 residues long: MARVEL domain-containing protein 2 (568 aa).

2 disordered regions span residues 1–72 and 116–163; these read MSGG…YPSD and SGGV…SYNS. The Cytoplasmic portion of the chain corresponds to 1-211; the sequence is MSGGGSSSGP…YMKSWAGLLR (211 aa). Residues 29 to 46 show a composition bias toward basic and acidic residues; it reads ADPRHPETNLETLHDRDL. Positions 52 to 62 are enriched in pro residues; that stretch reads PLPPPPLPLHP. Residues 205–379 enclose the MARVEL domain; that stretch reads SWAGLLRILC…SAMVSLKLWR (175 aa). Residues 212 to 232 form a helical membrane-spanning segment; it reads ILCIVELLLGAAVFACVTAYI. Residues 233-266 lie on the Extracellular side of the membrane; that stretch reads HKDNEWYNMFGYSQPYGYTASMQGGYYYSGPKTP. The chain crosses the membrane as a helical span at residues 267–287; the sequence is FVLVVAGLAWIVTIILLVLGM. Residues 288-303 are Cytoplasmic-facing; that stretch reads SMYYRTILLDSTWWPL. Residues 304 to 324 form a helical membrane-spanning segment; the sequence is TEFGINISLFILYMAGAIVYV. Residues 325-354 are Extracellular-facing; it reads NDTNRGGLCYYQLFNTPVNASFCRVEGGQT. The helical transmembrane segment at 355 to 375 threads the bilayer; that stretch reads AAIIFLFVSMLMYFISAMVSL. Over 376 to 568 the chain is Cytoplasmic; the sequence is KLWRHESARK…KVMDWNDGYN (193 aa). In terms of domain architecture, OCEL spans 451 to 562; that stretch reads PDYVAKYQAI…RIQEYDKVMD (112 aa). A coiled-coil region spans residues 462–559; it reads AEDERERYKA…IKQRIQEYDK (98 aa).

It belongs to the ELL/occludin family.

It localises to the cell membrane. The protein resides in the cell junction. The protein localises to the tight junction. Functionally, may play a role in the formation of the epithelial barrier. In Xenopus tropicalis (Western clawed frog), this protein is MARVEL domain-containing protein 2 (marveld2).